Reading from the N-terminus, the 739-residue chain is Sulfate transporter (739 aa).

The disordered stretch occupies residues 1–27 (MSSESKEQHNVSPRDSAEGNDSYPSGI). Residues serine 12 and serine 16 each carry the phosphoserine modification. The next 2 membrane-spanning stretches (helical) occupy residues 112-132 (VMSG…YSLL) and 137-157 (PVYG…LGTS). N-linked (GlcNAc...) asparagine glycosylation is found at asparagine 199 and asparagine 205. The next 2 helical transmembrane spans lie at 219-239 (IMVG…MGFF) and 242-262 (GFVS…GASF). Asparagine 357 carries N-linked (GlcNAc...) asparagine glycosylation. A run of 4 helical transmembrane segments spans residues 378–398 (LIPS…AITV), 420–440 (AIGF…SAAL), 455–475 (LSGV…APLF), and 524–544 (LLST…CVIL). The STAS domain maps to 568 to 719 (AYKNLQIKPG…YSVYEAMAFA (152 aa)).

The protein belongs to the SLC26A/SulP transporter (TC 2.A.53) family. In terms of processing, N-glycosylated. Ubiquitously expressed.

It localises to the cell membrane. Its subcellular location is the apical cell membrane. It carries out the reaction oxalate(in) + sulfate(out) = oxalate(out) + sulfate(in). The enzyme catalyses sulfate(out) + 2 chloride(in) = sulfate(in) + 2 chloride(out). It catalyses the reaction oxalate(out) + 2 chloride(in) = oxalate(in) + 2 chloride(out). The catalysed reaction is bromide(in) + chloride(out) = bromide(out) + chloride(in). It carries out the reaction nitrate(in) + chloride(out) = nitrate(out) + chloride(in). The enzyme catalyses iodide(in) + chloride(out) = iodide(out) + chloride(in). Its activity is regulated as follows. An extracellular acidic pH inhibits chloride-sulfate and chloride-oxalate exchange activity whereas an intracellular acidic pH activates chloride-sulfate exchange with no effect on chloride-oxalate exchange activity. In terms of biological role, sulfate transporter which mediates sulfate uptake into chondrocytes in order to maintain adequate sulfation of proteoglycans which is needed for cartilage development. Mediates electroneutral anion exchange of sulfate ions for oxalate ions and of sulfate and oxalate ions for chloride ions. Mediates exchange of sulfate and oxalate ions for hydroxyl ions and of chloride ions for bromide, iodide and nitrate ions. The coupling of sulfate transport to both hydroxyl and chloride ions likely serves to ensure transport at both acidic pH when most sulfate uptake is mediated by sulfate-hydroxide exchange and alkaline pH when most sulfate uptake is mediated by sulfate-chloride exchange. Essential for chondrocyte proliferation, differentiation and cell size expansion. The polypeptide is Sulfate transporter (SLC26A2) (Homo sapiens (Human)).